Consider the following 476-residue polypeptide: ATP synthase subunit beta (476 aa).

154–161 (GGAGVGKT) lines the ATP pocket.

The protein belongs to the ATPase alpha/beta chains family. As to quaternary structure, F-type ATPases have 2 components, CF(1) - the catalytic core - and CF(0) - the membrane proton channel. CF(1) has five subunits: alpha(3), beta(3), gamma(1), delta(1), epsilon(1). CF(0) has three main subunits: a(1), b(2) and c(9-12). The alpha and beta chains form an alternating ring which encloses part of the gamma chain. CF(1) is attached to CF(0) by a central stalk formed by the gamma and epsilon chains, while a peripheral stalk is formed by the delta and b chains.

Its subcellular location is the cell inner membrane. The enzyme catalyses ATP + H2O + 4 H(+)(in) = ADP + phosphate + 5 H(+)(out). Functionally, produces ATP from ADP in the presence of a proton gradient across the membrane. The catalytic sites are hosted primarily by the beta subunits. The polypeptide is ATP synthase subunit beta (Afipia carboxidovorans (strain ATCC 49405 / DSM 1227 / KCTC 32145 / OM5) (Oligotropha carboxidovorans)).